Here is a 589-residue protein sequence, read N- to C-terminus: Delta-like protein 3 (589 aa).

The signal sequence occupies residues 1-32 (MVSLQVSSLPQTLILAFLLPQALPAGVFELQI). Residues 33-494 (HSFGPGPGPG…LRQADSQRFL (462 aa)) are Extracellular-facing. The 40-residue stretch at 174–213 (ARCEPPAVGAACARLCRSRSAPSRCGPGLRPCTPFPDECE) folds into the DSL domain. EGF-like domains are found at residues 218–251 (SLTVCRAGCSPEHGYCEEPDECHCLEGWTGPLCT), 276–312 (GPGPCDGNPCANGGSCSETPGSFECACPRGFYGPRCE), 314–353 (SGVTCADGPCFNGGLCVGGEDPDSAYVCHCPPAFQGSNCE), 355–391 (RVDRCSLQPCQNGGLCLDLGHALRCRCRAGFAGPRCE), 393–429 (DLDDCAGRACANGGTCVEGGGARRCSCALGFGGRDCR), and 431–467 (RADPCASRPCAHGGRCYAHFSGLVCACAPGYMGVRCE). 18 cysteine pairs are disulfide-bonded: Cys-222/Cys-233, Cys-226/Cys-239, Cys-241/Cys-250, Cys-280/Cys-291, Cys-285/Cys-300, Cys-302/Cys-311, Cys-318/Cys-329, Cys-323/Cys-341, Cys-343/Cys-352, Cys-359/Cys-370, Cys-364/Cys-379, Cys-381/Cys-390, Cys-397/Cys-408, Cys-402/Cys-417, Cys-419/Cys-428, Cys-435/Cys-446, Cys-440/Cys-455, and Cys-457/Cys-466. The chain crosses the membrane as a helical span at residues 495–515 (LPPALGLLAAAALAGAALLLI). Residues 516-589 (HVRRRGPGRD…PAPSIYAREA (74 aa)) are Cytoplasmic-facing. The interval 552–574 (QDGAGDGPTSSADWNHPEDGDSR) is disordered.

Can bind and activate Notch-1 or another Notch receptor. In terms of processing, ubiquitinated by MIB (MIB1 or MIB2), leading to its endocytosis and subsequent degradation.

It localises to the membrane. In terms of biological role, inhibits primary neurogenesis. May be required to divert neurons along a specific differentiation pathway. Plays a role in the formation of somite boundaries during segmentation of the paraxial mesoderm. The sequence is that of Delta-like protein 3 (Dll3) from Rattus norvegicus (Rat).